Reading from the N-terminus, the 209-residue chain is Protease (209 aa).

Active-site residues include histidine 55, aspartate 72, and cysteine 123.

Belongs to the peptidase C5 family. Interacts with protease cofactor pVI-C; this interaction is necessary for protease activation.

It is found in the virion. Its subcellular location is the host nucleus. The enzyme catalyses Cleaves proteins of the adenovirus and its host cell at two consensus sites: -Yaa-Xaa-Gly-Gly-|-Xaa- and -Yaa-Xaa-Gly-Xaa-|-Gly- (in which Yaa is Met, Ile or Leu, and Xaa is any amino acid).. With respect to regulation, requires DNA and protease cofactor for maximal activation. Inside nascent virions, becomes partially activated by binding to the viral DNA, allowing it to cleave the cofactor that binds to the protease and fully activates it. Actin, like the viral protease cofactor, seems to act as a cofactor in the cleavage of cytokeratin 18 and of actin itself. In terms of biological role, cleaves viral precursor proteins (pTP, pIIIa, pVI, pVII, pVIII, and pX) inside newly assembled particles giving rise to mature virions. Protease complexed to its cofactor slides along the viral DNA to specifically locate and cleave the viral precursors. Mature virions have a weakened organization compared to the unmature virions, thereby facilitating subsequent uncoating. Without maturation, the particle lacks infectivity and is unable to uncoat. Late in adenovirus infection, in the cytoplasm, may participate in the cytoskeleton destruction. Cleaves host cell cytoskeletal keratins K7 and K18. The polypeptide is Protease (Human adenovirus D serotype 17 (HAdV-17)).